The chain runs to 352 residues: Probable protein phosphatase 2C 42 (352 aa).

Residues 26 to 321 enclose the PPM-type phosphatase domain; it reads AYASSAMQGY…DNMSVILVRF (296 aa). Mn(2+) is bound by residues Asp62, Gly63, Asp267, and Asp312. Positions 328–352 are disordered; that stretch reads RGARAATSSTSTGTVPSRHSKSISL. Over residues 329–341 the composition is skewed to low complexity; the sequence is GARAATSSTSTGT.

Belongs to the PP2C family. Mg(2+) is required as a cofactor. Mn(2+) serves as cofactor.

The enzyme catalyses O-phospho-L-seryl-[protein] + H2O = L-seryl-[protein] + phosphate. It catalyses the reaction O-phospho-L-threonyl-[protein] + H2O = L-threonyl-[protein] + phosphate. The sequence is that of Probable protein phosphatase 2C 42 from Oryza sativa subsp. japonica (Rice).